The chain runs to 349 residues: Ferredoxin--NADP reductase (349 aa).

Positions 35, 43, 48, 88, 123, 288, and 329 each coordinate FAD.

Belongs to the ferredoxin--NADP reductase type 2 family. As to quaternary structure, homodimer. The cofactor is FAD.

It catalyses the reaction 2 reduced [2Fe-2S]-[ferredoxin] + NADP(+) + H(+) = 2 oxidized [2Fe-2S]-[ferredoxin] + NADPH. This is Ferredoxin--NADP reductase from Colwellia psychrerythraea (strain 34H / ATCC BAA-681) (Vibrio psychroerythus).